A 452-amino-acid polypeptide reads, in one-letter code: C4-dicarboxylate transport protein 1 (452 aa).

9 consecutive transmembrane segments (helical) span residues 18–38, 51–71, 83–103, 151–171, 191–211, 229–249, 304–324, 337–357, and 359–379; these read FQVVCAVIAGVALGYFYPSVG, LIKMMIAPIIFCTVVVGIAGM, LALLYFEVVSTFALIIGLLLV, AFAKGEILQVLLLAILFGFAL, VLFTIVGFIMKVAPIGAFGAM, LMGAFYLTCLIFIFGVLGAIA, GYSFNLDGTSIYLTMAAVFIA, ITLLGVLLLTSKGAAGVTGSG, and IVLAATLSAVGTVPVAGLALI. The tract at residues 426 to 452 is disordered; the sequence is WEEAQEPERVLDKKTEHMPVSAMSDAG. The span at 431-442 shows a compositional bias: basic and acidic residues; sequence EPERVLDKKTEH.

The protein belongs to the dicarboxylate/amino acid:cation symporter (DAACS) (TC 2.A.23) family.

The protein localises to the cell inner membrane. Functionally, responsible for the transport of dicarboxylates such as succinate, fumarate, and malate from the periplasm across the membrane. The protein is C4-dicarboxylate transport protein 1 of Polaromonas naphthalenivorans (strain CJ2).